A 486-amino-acid polypeptide reads, in one-letter code: Glutamyl-tRNA(Gln) amidotransferase subunit A (486 aa).

Residues Lys-74 and Ser-149 each act as charge relay system in the active site. Residue Ser-173 is the Acyl-ester intermediate of the active site.

This sequence belongs to the amidase family. GatA subfamily. In terms of assembly, heterotrimer of A, B and C subunits.

It catalyses the reaction L-glutamyl-tRNA(Gln) + L-glutamine + ATP + H2O = L-glutaminyl-tRNA(Gln) + L-glutamate + ADP + phosphate + H(+). Its function is as follows. Allows the formation of correctly charged Gln-tRNA(Gln) through the transamidation of misacylated Glu-tRNA(Gln) in organisms which lack glutaminyl-tRNA synthetase. The reaction takes place in the presence of glutamine and ATP through an activated gamma-phospho-Glu-tRNA(Gln). The protein is Glutamyl-tRNA(Gln) amidotransferase subunit A of Prochlorococcus marinus (strain MIT 9313).